The primary structure comprises 570 residues: Alpha-1,2-mannosyltransferase ALG9 (570 aa).

The tract at residues 1–37 is disordered; that stretch reads MDLTTTRQRRPLISDSSSSSSTKSYSKTDKPGRSNGG. A compositionally biased stretch (low complexity) spans 14–25; sequence SDSSSSSSTKSY. A run of 8 helical transmembrane segments spans residues 129–149, 160–180, 208–228, 237–257, 297–317, 324–344, 349–369, and 381–401; these read AVRL…VVAL, YAVA…SFLP, VVGV…VVIY, AFIA…LVDY, FNNF…YPVI, ALLV…LQPH, FLYP…ENIP, and SLLV…ILCA. The N-linked (GlcNAc...) asparagine glycan is linked to N473.

The protein belongs to the glycosyltransferase 22 family.

The protein localises to the endoplasmic reticulum membrane. The enzyme catalyses an alpha-D-Man-(1-&gt;2)-alpha-D-Man-(1-&gt;2)-alpha-D-Man-(1-&gt;3)-[alpha-D-Man-(1-&gt;3)-alpha-D-Man-(1-&gt;6)]-beta-D-Man-(1-&gt;4)-beta-D-GlcNAc-(1-&gt;4)-alpha-D-GlcNAc-diphospho-di-trans,poly-cis-dolichol + a di-trans,poly-cis-dolichyl beta-D-mannosyl phosphate = an alpha-D-Man-(1-&gt;2)-alpha-D-Man-(1-&gt;2)-alpha-D-Man-(1-&gt;3)-[alpha-D-Man-(1-&gt;2)-alpha-D-Man-(1-&gt;3)-alpha-D-Man-(1-&gt;6)]-beta-D-Man-(1-&gt;4)-beta-D-GlcNAc-(1-&gt;4)-alpha-D-GlcNAc-diphospho-di-trans,poly-cis-dolichol + a di-trans,poly-cis-dolichyl phosphate + H(+). It catalyses the reaction an alpha-D-Man-(1-&gt;2)-alpha-D-Man-(1-&gt;2)-alpha-D-Man-(1-&gt;3)-[alpha-D-Man-(1-&gt;2)-alpha-D-Man-(1-&gt;3)-[alpha-D-Man-(1-&gt;6)]-alpha-D-Man-(1-&gt;6)]-beta-D-Man-(1-&gt;4)-beta-D-GlcNAc-(1-&gt;4)-alpha-D-GlcNAc-diphospho-di-trans,poly-cis-dolichol + a di-trans,poly-cis-dolichyl beta-D-mannosyl phosphate = an alpha-D-Man-(1-&gt;2)-alpha-D-Man-(1-&gt;2)-alpha-D-Man-(1-&gt;3)-[alpha-D-Man-(1-&gt;2)-alpha-D-Man-(1-&gt;3)-[alpha-D-Man-(1-&gt;2)-alpha-D-Man-(1-&gt;6)]-alpha-D-Man-(1-&gt;6)]-beta-D-Man-(1-&gt;4)-beta-D-GlcNAc-(1-&gt;4)-alpha-D-GlcNAc-diphospho-di-trans,poly-cis-dolichol + a di-trans,poly-cis-dolichyl phosphate + H(+). It participates in protein modification; protein glycosylation. Its function is as follows. Mannosyltransferase that operates in the biosynthetic pathway of dolichol-linked oligosaccharides, the glycan precursors employed in protein asparagine (N)-glycosylation. The assembly of dolichol-linked oligosaccharides begins on the cytosolic side of the endoplasmic reticulum membrane and finishes in its lumen. The sequential addition of sugars to dolichol pyrophosphate produces dolichol-linked oligosaccharides containing fourteen sugars, including two GlcNAcs, nine mannoses and three glucoses. Once assembled, the oligosaccharide is transferred from the lipid to nascent proteins by oligosaccharyltransferases. In the lumen of the endoplasmic reticulum, catalyzes the addition of the seventh and ninth alpha-1,2-linked mannose residues to Man(6)GlcNAc(2)-PP-dolichol and Man(8)GlcNAc(2)-PP-dolichol respectively. The protein is Alpha-1,2-mannosyltransferase ALG9 (ALG9) of Arabidopsis thaliana (Mouse-ear cress).